Here is a 473-residue protein sequence, read N- to C-terminus: MLFSFFLLLTCTQLCLGTNRPDYNDDEEDDYKPPVYKPSPSKYRPVNPCLKKPCKYNGVCKPRGGSYKCFCKGGYYGYNCNLKNACKPNQCKNKSRCVPVGKTFKCVCRNGNFGRLCEKNVCSPNPCKNNGKCSPLGKTGYKCTCSGGYTGPRCEVHACKPNPCKNKGRCFPDGKTGYKCRCVDGYSGPTCQENACKPNPCSNGGTCSADKFGDYSCECRPGYFGPECERYVCAPNPCKNGGICSSDGSGGYRCRCKGGYSGPTCKVNVCKPTPCKNSGRCVNKGSSYNCICKGGYSGPTCGENVCKPNPCQNRGRCYPDNSDDGFKCRCVGGYKGPTCEDKPNPCNTKPCKNGGKCNYNGKIYTCKCAYGWRGRHCTDKAYKPNPCVVSKPCKNRGKCIWNGKAYRCKCAYGYGGRHCTKKSYKKNPCASRPCKNRGKCTDKGNGYVCKCARGYSGRYCSLKSPPSYDDDEY.

Positions 1-17 are cleaved as a signal peptide; sequence MLFSFFLLLTCTQLCLG. 3',4'-dihydroxyphenylalanine is present on residues tyrosine 23, tyrosine 31, tyrosine 36, and tyrosine 43. 11 EGF-like domains span residues 45–81, 82–117, 118–154, 155–191, 192–228, 229–265, 266–301, 302–340, 342–378, 383–420, and 425–461; these read PVNPCLKKPCKYNGVCKPRGGSYKCFCKGGYYGYNCN, LKNACKPNQCKNKSRCVPVGKTFKCVCRNGNFGRLC, EKNVCSPNPCKNNGKCSPLGKTGYKCTCSGGYTGPRC, EVHACKPNPCKNKGRCFPDGKTGYKCRCVDGYSGPTC, QENACKPNPCSNGGTCSADKFGDYSCECRPGYFGPEC, ERYVCAPNPCKNGGICSSDGSGGYRCRCKGGYSGPTC, KVNVCKPTPCKNSGRCVNKGSSYNCICKGGYSGPTC, GENVCKPNPCQNRGRCYPDNSDDGFKCRCVGGYKGPTCE, KPNPCNTKPCKNGGKCNYNGKIYTCKCAYGWRGRHCT, KPNPCVVSKPCKNRGKCIWNGKAYRCKCAYGYGGRHCT, and KKNPCASRPCKNRGKCTDKGNGYVCKCARGYSGRYCS. Cystine bridges form between cysteine 49-cysteine 60, cysteine 54-cysteine 69, cysteine 71-cysteine 80, cysteine 86-cysteine 97, cysteine 91-cysteine 106, cysteine 108-cysteine 117, cysteine 122-cysteine 133, cysteine 127-cysteine 143, cysteine 145-cysteine 154, cysteine 159-cysteine 170, cysteine 164-cysteine 180, cysteine 182-cysteine 191, cysteine 196-cysteine 207, cysteine 201-cysteine 217, cysteine 219-cysteine 228, cysteine 233-cysteine 244, cysteine 238-cysteine 254, cysteine 256-cysteine 265, cysteine 270-cysteine 281, cysteine 275-cysteine 290, cysteine 292-cysteine 301, cysteine 306-cysteine 317, cysteine 311-cysteine 328, cysteine 330-cysteine 339, cysteine 346-cysteine 357, cysteine 351-cysteine 366, cysteine 368-cysteine 377, cysteine 387-cysteine 399, cysteine 393-cysteine 408, cysteine 410-cysteine 419, cysteine 429-cysteine 440, cysteine 434-cysteine 449, and cysteine 451-cysteine 460. Asparagine 93 carries N-linked (GlcNAc...) asparagine glycosylation.

Post-translationally, contains L-DOPA (3',4'-dihydroxyphenylalanine). In terms of tissue distribution, produced by the byssal gland.

It is found in the secreted. Provides adhesiveness to the mussel's foot. Mussels produce one of the strongest water insoluble glues. The mussel's adhesive is a bundle of threads, called a byssus, formed by a fibrous collagenous core coated with adhesive proteins. The chain is Adhesive plaque matrix protein 2 (FP2) from Mytilus galloprovincialis (Mediterranean mussel).